The primary structure comprises 320 residues: MVTVVDRVTDRRLRHPEKAHRPDTSVQKKPDWIRVKAPTSQVYKETHGIVRAHKLVTVCEEAGCPNIGECWSQRHASFMILGEICTRACAFCNVATGIPFAVDENEPERVADAVARMELKHVVITSVDRDDLADGGAEHFAKVIYAIRRKAPKTTIEVLTPDFRHKDGALEIVVAAKPDVFNHNLETVPSKYLKVRPGARYFHSIRLLQRVKELDPTIFTKSGIMVGLGEERNEILQLMDDLRSADVDFMTIGQYLQPTRKHHPVIRFVPPEEFESFAKIGKVKGFLHMASNPLTRSSHHAGDDFAILQKARDEKFALQR.

The interval 1–28 (MVTVVDRVTDRRLRHPEKAHRPDTSVQK) is disordered. The segment covering 19–28 (AHRPDTSVQK) has biased composition (basic and acidic residues). 7 residues coordinate [4Fe-4S] cluster: C59, C64, C70, C85, C89, C92, and S298. One can recognise a Radical SAM core domain in the interval 71 to 287 (WSQRHASFMI…AKIGKVKGFL (217 aa)).

This sequence belongs to the radical SAM superfamily. Lipoyl synthase family. It depends on [4Fe-4S] cluster as a cofactor.

It is found in the cytoplasm. The catalysed reaction is [[Fe-S] cluster scaffold protein carrying a second [4Fe-4S](2+) cluster] + N(6)-octanoyl-L-lysyl-[protein] + 2 oxidized [2Fe-2S]-[ferredoxin] + 2 S-adenosyl-L-methionine + 4 H(+) = [[Fe-S] cluster scaffold protein] + N(6)-[(R)-dihydrolipoyl]-L-lysyl-[protein] + 4 Fe(3+) + 2 hydrogen sulfide + 2 5'-deoxyadenosine + 2 L-methionine + 2 reduced [2Fe-2S]-[ferredoxin]. Its pathway is protein modification; protein lipoylation via endogenous pathway; protein N(6)-(lipoyl)lysine from octanoyl-[acyl-carrier-protein]: step 2/2. Functionally, catalyzes the radical-mediated insertion of two sulfur atoms into the C-6 and C-8 positions of the octanoyl moiety bound to the lipoyl domains of lipoate-dependent enzymes, thereby converting the octanoylated domains into lipoylated derivatives. In Bartonella henselae (strain ATCC 49882 / DSM 28221 / CCUG 30454 / Houston 1) (Rochalimaea henselae), this protein is Lipoyl synthase.